Here is a 101-residue protein sequence, read N- to C-terminus: Small ribosomal subunit protein eS24 (101 aa).

This sequence belongs to the eukaryotic ribosomal protein eS24 family.

The sequence is that of Small ribosomal subunit protein eS24 from Methanosarcina acetivorans (strain ATCC 35395 / DSM 2834 / JCM 12185 / C2A).